Consider the following 677-residue polypeptide: Nuclear fusion protein FUS2 (677 aa).

Thr-20 is subject to Phosphothreonine. Residues Ser-67, Ser-72, and Ser-84 each carry the phosphoserine modification. Position 88 is a phosphothreonine (Thr-88). Phosphoserine is present on residues Ser-100 and Ser-106. Residues 112-326 enclose the DH domain; the sequence is KFYKIVQEFY…KYSLFSNKLE (215 aa).

It localises to the cell tip. Functionally, promotes cell fusion during zygote formation. The protein is Nuclear fusion protein FUS2 (FUS2) of Saccharomyces cerevisiae (strain ATCC 204508 / S288c) (Baker's yeast).